A 124-amino-acid chain; its full sequence is Small ribosomal subunit protein bS6 (124 aa).

Residues 96-124 are disordered; it reads ETGPSPMMKEVQREEAKKAAAAQPTEAQA. The span at 114–124 shows a compositional bias: low complexity; it reads AAAAQPTEAQA.

This sequence belongs to the bacterial ribosomal protein bS6 family.

Its function is as follows. Binds together with bS18 to 16S ribosomal RNA. This chain is Small ribosomal subunit protein bS6, found in Burkholderia lata (strain ATCC 17760 / DSM 23089 / LMG 22485 / NCIMB 9086 / R18194 / 383).